Here is a 541-residue protein sequence, read N- to C-terminus: Glutamine-dependent NAD(+) synthetase (541 aa).

The CN hydrolase domain occupies 4-243 (FKIALAQFSP…EELYYSEFDI (240 aa)). E44 serves as the catalytic Proton acceptor; for glutaminase activity. The active-site For glutaminase activity is the K111. Position 117 (Y117) interacts with L-glutamine. Catalysis depends on C147, which acts as the Nucleophile; for glutaminase activity. The L-glutamine site is built by S173 and K179. 286–293 (GLSGGIDS) contacts ATP. N369 provides a ligand contact to deamido-NAD(+). ATP is bound at residue T393. Residues E398 and K510 each contribute to the deamido-NAD(+) site.

The protein in the C-terminal section; belongs to the NAD synthetase family.

It catalyses the reaction deamido-NAD(+) + L-glutamine + ATP + H2O = L-glutamate + AMP + diphosphate + NAD(+) + H(+). It participates in cofactor biosynthesis; NAD(+) biosynthesis; NAD(+) from deamido-NAD(+) (L-Gln route): step 1/1. Functionally, catalyzes the ATP-dependent amidation of deamido-NAD to form NAD. Uses L-glutamine as a nitrogen source. In vitro, can also use ammonia as donor with comparable specific activity, but cannot use nicotinate mononucleotide (NaMN) as substrate. The protein is Glutamine-dependent NAD(+) synthetase of Acinetobacter baylyi (strain ATCC 33305 / BD413 / ADP1).